A 571-amino-acid chain; its full sequence is Coenzyme A biosynthesis protein 3 (571 aa).

Disordered stretches follow at residues 1–72 and 100–120; these read MTDE…YKND and INTSMPANTNGQQKRFSPSLP. Residues 8 to 35 show a composition bias toward polar residues; the sequence is SDQNMNGKQGVNLISSLPTTQVPVSILT. Position 42 is a phosphoserine (S42). Over residues 43–59 the composition is skewed to basic and acidic residues; that stretch reads IHDESNFERSDSHEDQS. Polar residues predominate over residues 60–72; sequence KSNSNRRNIYKND. Phosphoserine occurs at positions 116, 121, and 124. Disordered regions lie at residues 140–171 and 209–244; these read ISNKPGKQQQQQEQLQQNQQQEEQQKAQLQEQ and IFKENTTNDGTDIRKHSVSSGTSNSEDEVDSPSMEK. A compositionally biased stretch (low complexity) spans 146 to 171; sequence KQQQQQEQLQQNQQQEEQQKAQLQEQ. S264 bears the Phosphoserine mark. Residues 507-571 are disordered; it reads RDEETGDKEQ…EDEEDVKTEV (65 aa). Over residues 516-571 the composition is skewed to acidic residues; it reads QEQEEQEGADNEDDDDEDDEEDEEDEEEEEALNETASDESNDEEDEEDEEDVKTEV.

This sequence belongs to the HFCD (homooligomeric flavin containing Cys decarboxylase) superfamily. As to quaternary structure, component of the phosphopantothenoylcysteine decarboxylase (PPCDC) complex, a heterotrimer composed of CAB3, HAL3 and VHS3.

It is found in the cytoplasm. In terms of biological role, component of the phosphopantothenoylcysteine decarboxylase (PPCDC) involved in the coenzyme A synthesis. This chain is Coenzyme A biosynthesis protein 3 (CAB3), found in Saccharomyces cerevisiae (strain ATCC 204508 / S288c) (Baker's yeast).